Consider the following 255-residue polypeptide: Acetylglutamate kinase (255 aa).

Residues 40 to 41, Arg-62, and Asn-153 each bind substrate; that span reads GG.

The protein belongs to the acetylglutamate kinase family. ArgB subfamily.

The protein resides in the cytoplasm. It catalyses the reaction N-acetyl-L-glutamate + ATP = N-acetyl-L-glutamyl 5-phosphate + ADP. It participates in amino-acid biosynthesis; L-arginine biosynthesis; N(2)-acetyl-L-ornithine from L-glutamate: step 2/4. In terms of biological role, catalyzes the ATP-dependent phosphorylation of N-acetyl-L-glutamate. In Bacillus cereus (strain 03BB102), this protein is Acetylglutamate kinase.